The chain runs to 237 residues: Ribonuclease 3 (237 aa).

In terms of domain architecture, RNase III spans 6-133; that stretch reads LIEVEKLIGI…VIAAVYLDKG (128 aa). Glutamate 46 contacts Mg(2+). Aspartate 50 is a catalytic residue. Residues aspartate 119 and glutamate 122 each coordinate Mg(2+). Glutamate 122 is an active-site residue. In terms of domain architecture, DRBM spans 160 to 229; sequence DFKTRLQEVL…AKAALQRLGE (70 aa).

The protein belongs to the ribonuclease III family. Homodimer. Requires Mg(2+) as cofactor.

Its subcellular location is the cytoplasm. It catalyses the reaction Endonucleolytic cleavage to 5'-phosphomonoester.. Its function is as follows. Digests double-stranded RNA. Involved in the processing of primary rRNA transcript to yield the immediate precursors to the large and small rRNAs (23S and 16S). Processes some mRNAs, and tRNAs when they are encoded in the rRNA operon. Processes pre-crRNA and tracrRNA of type II CRISPR loci if present in the organism. The protein is Ribonuclease 3 of Clostridium perfringens (strain 13 / Type A).